The sequence spans 463 residues: Flotillin-like protein 2 (463 aa).

A lipid anchor (S-palmitoyl cysteine) is attached at C35. Residues 305–354 (EYETKVQEANWELYNKQKQAEAVLYEKQKQAEAQKAEADATFYSKQKEAE) are a coiled coil.

Belongs to the band 7/mec-2 family. Flotillin subfamily. Post-translationally, may be palmitoylated.

It is found in the cell membrane. The protein resides in the membrane. It localises to the caveola. In terms of biological role, may act as a scaffolding protein within caveolar membranes, functionally participating in formation of caveolae or caveolae-like vesicles. In Arabidopsis thaliana (Mouse-ear cress), this protein is Flotillin-like protein 2 (FLOT2).